A 569-amino-acid polypeptide reads, in one-letter code: 2-isopropylmalate synthase (569 aa).

In terms of domain architecture, Pyruvate carboxyltransferase spans 31–305 (PRWMSTDLRD…APELDFSDID (275 aa)). The Mg(2+) site is built by Asp40, His244, His246, and Asn280. The regulatory domain stretch occupies residues 437-569 (RETPLRYVSH…TASASAATEA (133 aa)).

Belongs to the alpha-IPM synthase/homocitrate synthase family. LeuA type 2 subfamily. As to quaternary structure, homodimer. It depends on Mg(2+) as a cofactor.

The protein localises to the cytoplasm. The catalysed reaction is 3-methyl-2-oxobutanoate + acetyl-CoA + H2O = (2S)-2-isopropylmalate + CoA + H(+). The protein operates within amino-acid biosynthesis; L-leucine biosynthesis; L-leucine from 3-methyl-2-oxobutanoate: step 1/4. Functionally, catalyzes the condensation of the acetyl group of acetyl-CoA with 3-methyl-2-oxobutanoate (2-ketoisovalerate) to form 3-carboxy-3-hydroxy-4-methylpentanoate (2-isopropylmalate). In Cupriavidus taiwanensis (strain DSM 17343 / BCRC 17206 / CCUG 44338 / CIP 107171 / LMG 19424 / R1) (Ralstonia taiwanensis (strain LMG 19424)), this protein is 2-isopropylmalate synthase.